The following is a 623-amino-acid chain: Kelch repeat and BTB domain-containing protein 2 (623 aa).

The BTB domain occupies 31–98; the sequence is TDIVLIVEGT…AYTGNLAMND (68 aa). Positions 133–229 constitute a BACK domain; that stretch reads CVRLLSFADL…IRIDALSEVT (97 aa). Ser-300 is subject to Phosphoserine. 5 Kelch repeats span residues 317-380, 381-429, 431-469, 470-529, and 535-581; these read DIYI…CCEG, HIYA…VVHD, IYVM…AFGD, KIFY…RAVV, and CVFM…DFRC.

In terms of assembly, component of the BCR(KBTBD2) E3 ubiquitin ligase complex, at least composed of CUL3, KBTBD2 and RBX1. Interacts (via the BTB domain) with CUL3.

The protein operates within protein modification; protein ubiquitination. Its function is as follows. Substrate-specific adapter of a BCR (BTB-CUL3-RBX1) E3 ubiquitin ligase complex that acts as a regulator of the insulin signaling pathway, modulating insulin sensitivity by limiting PIK3R1/p85alpha abundance in adipocytes. Targets PIK3R1, the regulatory subunit of phosphatidylinositol 3-kinase (PI3K), for 'Lys-48'-linked polyubiquitination and proteasome-mediated degradation. The polypeptide is Kelch repeat and BTB domain-containing protein 2 (KBTBD2) (Pongo abelii (Sumatran orangutan)).